A 250-amino-acid chain; its full sequence is 3-deoxy-manno-octulosonate cytidylyltransferase (250 aa).

This sequence belongs to the KdsB family.

The protein resides in the cytoplasm. It catalyses the reaction 3-deoxy-alpha-D-manno-oct-2-ulosonate + CTP = CMP-3-deoxy-beta-D-manno-octulosonate + diphosphate. It participates in nucleotide-sugar biosynthesis; CMP-3-deoxy-D-manno-octulosonate biosynthesis; CMP-3-deoxy-D-manno-octulosonate from 3-deoxy-D-manno-octulosonate and CTP: step 1/1. Its pathway is bacterial outer membrane biogenesis; lipopolysaccharide biosynthesis. Activates KDO (a required 8-carbon sugar) for incorporation into bacterial lipopolysaccharide in Gram-negative bacteria. This Pectobacterium atrosepticum (strain SCRI 1043 / ATCC BAA-672) (Erwinia carotovora subsp. atroseptica) protein is 3-deoxy-manno-octulosonate cytidylyltransferase.